The primary structure comprises 80 residues: Acyl carrier protein (80 aa).

Positions 4–79 (EAILEKVRSI…DAVKYIEDKQ (76 aa)) constitute a Carrier domain. S39 carries the post-translational modification O-(pantetheine 4'-phosphoryl)serine.

The protein belongs to the acyl carrier protein (ACP) family. Post-translationally, 4'-phosphopantetheine is transferred from CoA to a specific serine of apo-ACP by AcpS. This modification is essential for activity because fatty acids are bound in thioester linkage to the sulfhydryl of the prosthetic group.

It is found in the cytoplasm. Its pathway is lipid metabolism; fatty acid biosynthesis. Functionally, carrier of the growing fatty acid chain in fatty acid biosynthesis. The sequence is that of Acyl carrier protein from Parasynechococcus marenigrum (strain WH8102).